The sequence spans 319 residues: Thymidylate synthase (319 aa).

Residues R25 and 181–182 each bind dUMP; that span reads RR. Catalysis depends on C201, which acts as the Nucleophile. DUMP-binding positions include 221 to 224, N232, and 262 to 264; these read RSAD and HIY. D224 lines the (6R)-5,10-methylene-5,6,7,8-tetrahydrofolate pocket. A318 contributes to the (6R)-5,10-methylene-5,6,7,8-tetrahydrofolate binding site.

Belongs to the thymidylate synthase family. Bacterial-type ThyA subfamily. As to quaternary structure, homodimer.

The protein localises to the cytoplasm. The enzyme catalyses dUMP + (6R)-5,10-methylene-5,6,7,8-tetrahydrofolate = 7,8-dihydrofolate + dTMP. The protein operates within pyrimidine metabolism; dTTP biosynthesis. Its function is as follows. Catalyzes the reductive methylation of 2'-deoxyuridine-5'-monophosphate (dUMP) to 2'-deoxythymidine-5'-monophosphate (dTMP) while utilizing 5,10-methylenetetrahydrofolate (mTHF) as the methyl donor and reductant in the reaction, yielding dihydrofolate (DHF) as a by-product. This enzymatic reaction provides an intracellular de novo source of dTMP, an essential precursor for DNA biosynthesis. The protein is Thymidylate synthase of Oenococcus oeni (strain ATCC BAA-331 / PSU-1).